Reading from the N-terminus, the 347-residue chain is Protein RecA (347 aa).

Position 67-74 (67-74) interacts with ATP; it reads GPESSGKT.

The protein belongs to the RecA family.

It localises to the cytoplasm. Functionally, can catalyze the hydrolysis of ATP in the presence of single-stranded DNA, the ATP-dependent uptake of single-stranded DNA by duplex DNA, and the ATP-dependent hybridization of homologous single-stranded DNAs. It interacts with LexA causing its activation and leading to its autocatalytic cleavage. The polypeptide is Protein RecA (Helicobacter pylori (strain G27)).